Here is an 883-residue protein sequence, read N- to C-terminus: Translation initiation factor IF-2 (883 aa).

Disordered stretches follow at residues 1-96 (MVDT…RSGM) and 132-259 (QRRA…RGRL). A compositionally biased stretch (low complexity) spans 57–66 (PAEPAAAAPE). Pro residues predominate over residues 72 to 87 (TPAPPAVSPRQQPRPS). Over residues 132–188 (QRRAAQELVDKAEREAAEVRRKAEEERHRHEEETKRKAETEAKKRFGEAEPAKKPAD) the composition is skewed to basic and acidic residues. The span at 191–217 (PASTSTTTTAPRAPVTTTTRPPAVAAE) shows a compositional bias: low complexity. In terms of domain architecture, tr-type G spans 380-551 (PRSPVVTVMG…ALQAELLDLK (172 aa)). The interval 389-396 (GHVDHGKT) is G1. GTP is bound at residue 389-396 (GHVDHGKT). Residues 414–418 (GITQH) form a G2 region. The G3 stretch occupies residues 437–440 (DTPG). GTP is bound by residues 437–441 (DTPGH) and 491–494 (NKID). A G4 region spans residues 491 to 494 (NKID). Residues 527 to 529 (SAK) form a G5 region.

The protein belongs to the TRAFAC class translation factor GTPase superfamily. Classic translation factor GTPase family. IF-2 subfamily.

It localises to the cytoplasm. Its function is as follows. One of the essential components for the initiation of protein synthesis. Protects formylmethionyl-tRNA from spontaneous hydrolysis and promotes its binding to the 30S ribosomal subunits. Also involved in the hydrolysis of GTP during the formation of the 70S ribosomal complex. The protein is Translation initiation factor IF-2 of Rhodopseudomonas palustris (strain BisB5).